The following is an 88-amino-acid chain: MIIFYGLFSILVLTSINIAEAGHHNRVNCLLPPKTGPCKGSFARYYFDIETGSCKAFIYGGCEGNSNNFSEKHHCEKRCRGFRKFGGK.

Positions 1–21 are cleaved as a signal peptide; it reads MIIFYGLFSILVLTSINIAEA. One can recognise a BPTI/Kunitz inhibitor domain in the interval 29-79; it reads CLLPPKTGPCKGSFARYYFDIETGSCKAFIYGGCEGNSNNFSEKHHCEKRC. 3 disulfide bridges follow: Cys29–Cys79, Cys38–Cys62, and Cys54–Cys75. The N-linked (GlcNAc...) asparagine glycan is linked to Asn68.

The protein belongs to the venom Kunitz-type family. Scorpion delta-Ktx subfamily. Delta-Ktx 1 sub-subfamily. In terms of tissue distribution, expressed by the venom gland.

Its subcellular location is the secreted. Its function is as follows. Dual-function toxin that inhibits trypsin at a molar ratio of 1:1 (Ki=107 nM) and inhibits mKv1.3/KCNA3 potassium channels (IC(50)=6.2 nM, and inhibits 80% of currents at 1 uM). The sequence is that of Kunitz-type serine protease inhibitor Hg1 from Hoffmannihadrurus gertschi (Scorpion).